A 361-amino-acid chain; its full sequence is Queuine tRNA-ribosyltransferase (361 aa).

The active-site Proton acceptor is Asp92. Substrate contacts are provided by residues 92-96 (DSGGF), Asp146, Gln189, and Gly216. Residues 247–253 (GVGKPAD) are RNA binding. Catalysis depends on Asp266, which acts as the Nucleophile. The RNA binding; important for wobble base 34 recognition stretch occupies residues 271–275 (TRSGR). Cys304, Cys306, Cys309, and His335 together coordinate Zn(2+).

This sequence belongs to the queuine tRNA-ribosyltransferase family. As to quaternary structure, homodimer. Within each dimer, one monomer is responsible for RNA recognition and catalysis, while the other monomer binds to the replacement base PreQ1. It depends on Zn(2+) as a cofactor.

It catalyses the reaction 7-aminomethyl-7-carbaguanine + guanosine(34) in tRNA = 7-aminomethyl-7-carbaguanosine(34) in tRNA + guanine. Its pathway is tRNA modification; tRNA-queuosine biosynthesis. Functionally, catalyzes the base-exchange of a guanine (G) residue with the queuine precursor 7-aminomethyl-7-deazaguanine (PreQ1) at position 34 (anticodon wobble position) in tRNAs with GU(N) anticodons (tRNA-Asp, -Asn, -His and -Tyr). Catalysis occurs through a double-displacement mechanism. The nucleophile active site attacks the C1' of nucleotide 34 to detach the guanine base from the RNA, forming a covalent enzyme-RNA intermediate. The proton acceptor active site deprotonates the incoming PreQ1, allowing a nucleophilic attack on the C1' of the ribose to form the product. After dissociation, two additional enzymatic reactions on the tRNA convert PreQ1 to queuine (Q), resulting in the hypermodified nucleoside queuosine (7-(((4,5-cis-dihydroxy-2-cyclopenten-1-yl)amino)methyl)-7-deazaguanosine). In Rickettsia typhi (strain ATCC VR-144 / Wilmington), this protein is Queuine tRNA-ribosyltransferase.